A 437-amino-acid chain; its full sequence is Methylenetetrahydrofolate--tRNA-(uracil-5-)-methyltransferase TrmFO (437 aa).

10–15 (GAGLAG) contributes to the FAD binding site.

Belongs to the MnmG family. TrmFO subfamily. FAD serves as cofactor.

It is found in the cytoplasm. The enzyme catalyses uridine(54) in tRNA + (6R)-5,10-methylene-5,6,7,8-tetrahydrofolate + NADH + H(+) = 5-methyluridine(54) in tRNA + (6S)-5,6,7,8-tetrahydrofolate + NAD(+). It catalyses the reaction uridine(54) in tRNA + (6R)-5,10-methylene-5,6,7,8-tetrahydrofolate + NADPH + H(+) = 5-methyluridine(54) in tRNA + (6S)-5,6,7,8-tetrahydrofolate + NADP(+). Catalyzes the folate-dependent formation of 5-methyl-uridine at position 54 (M-5-U54) in all tRNAs. The polypeptide is Methylenetetrahydrofolate--tRNA-(uracil-5-)-methyltransferase TrmFO (Brevibacillus brevis (strain 47 / JCM 6285 / NBRC 100599)).